Reading from the N-terminus, the 854-residue chain is Translation initiation factor IF-2 (854 aa).

2 disordered regions span residues 52-79 (RQHG…RDGG) and 128-265 (RKQE…HGFQ). Over residues 61–75 (SQRITLQRKTTSTLS) the composition is skewed to polar residues. Composition is skewed to basic and acidic residues over residues 128-150 (RKQE…RQEA) and 211-232 (VRHD…DNKR). Positions 247 to 257 (RGKLGRKNKKP) are enriched in basic residues. Residues 354-523 (KRAPVVTVMG…LLQAEVLELT (170 aa)) form the tr-type G domain. Residues 363-370 (GHVDHGKT) form a G1 region. 363–370 (GHVDHGKT) contributes to the GTP binding site. Residues 388–392 (GITQH) are G2. A G3 region spans residues 409–412 (DTPG). 409-413 (DTPGH) provides a ligand contact to GTP. Residues 463–466 (TKID) are G4. The tract at residues 499–501 (SAK) is G5.

This sequence belongs to the TRAFAC class translation factor GTPase superfamily. Classic translation factor GTPase family. IF-2 subfamily.

The protein localises to the cytoplasm. Its function is as follows. One of the essential components for the initiation of protein synthesis. Protects formylmethionyl-tRNA from spontaneous hydrolysis and promotes its binding to the 30S ribosomal subunits. Also involved in the hydrolysis of GTP during the formation of the 70S ribosomal complex. The chain is Translation initiation factor IF-2 from Marinomonas sp. (strain MWYL1).